Here is a 260-residue protein sequence, read N- to C-terminus: MKPKISFNNVVMRYGGFLALDRLNLDIADGEFVTVVGPSGCGKSTAMNIAAGLLQPSGGEILVGDKPVTGPGPERGVIFQQYALFPWLTVRQNVEFGLSVAGMSRVKRREISDHYLSLVGLTDFADALPKALSGGMKQRCAIARAYAAAPEILLMDEPFAALDALTRVHMQDQLLDAWSRERRTVMFITHDVDEAVYLANRVIVMAARPGRLDQIIPVDLPYPRTEAIRLSPEFAAIRNRVWHAVYHQQPQTDQQSSHGQ.

Residues 5 to 228 (ISFNNVVMRY…DLPYPRTEAI (224 aa)) form the ABC transporter domain. 37-44 (GPSGCGKS) lines the ATP pocket.

It belongs to the ABC transporter superfamily. The complex is composed of two ATP-binding proteins (BruAb2_1123), two transmembrane proteins (BruAb2_1124) and a solute-binding protein (BruAb2_1122).

It is found in the cell inner membrane. In terms of biological role, probably part of an ABC transporter complex. Probably Responsible for energy coupling to the transport system. The sequence is that of Putative ATP-binding protein BruAb2_1123 from Brucella abortus biovar 1 (strain 9-941).